A 145-amino-acid chain; its full sequence is AP-2 complex subunit sigma (145 aa).

Belongs to the adaptor complexes small subunit family. In terms of assembly, adaptor protein complex 2 (AP-2) is a heterotetramer composed of two large adaptins (alpha-type subunit apl3 and beta-type subunit apl1), a medium chain (mu-type subunit apm4) and a small adaptin (sigma-type subunit aps2).

The protein resides in the cell membrane. The protein localises to the membrane. Its subcellular location is the coated pit. Its function is as follows. Component of the adaptor complexes which link clathrin to receptors in coated vesicles. Clathrin-associated protein complexes are believed to interact with the cytoplasmic tails of membrane proteins, leading to their selection and concentration. The polypeptide is AP-2 complex subunit sigma (aps2) (Aspergillus fumigatus (strain ATCC MYA-4609 / CBS 101355 / FGSC A1100 / Af293) (Neosartorya fumigata)).